The chain runs to 305 residues: Glycine--tRNA ligase alpha subunit (305 aa).

The protein belongs to the class-II aminoacyl-tRNA synthetase family. Tetramer of two alpha and two beta subunits.

The protein localises to the cytoplasm. The enzyme catalyses tRNA(Gly) + glycine + ATP = glycyl-tRNA(Gly) + AMP + diphosphate. This chain is Glycine--tRNA ligase alpha subunit, found in Streptococcus gordonii (strain Challis / ATCC 35105 / BCRC 15272 / CH1 / DL1 / V288).